We begin with the raw amino-acid sequence, 310 residues long: Lipoyl synthase (310 aa).

Residues cysteine 45, cysteine 50, cysteine 56, cysteine 71, cysteine 75, cysteine 78, and serine 285 each coordinate [4Fe-4S] cluster. The Radical SAM core domain maps to 57–274 (WTKKHATVMI…GSIARAKGFL (218 aa)).

This sequence belongs to the radical SAM superfamily. Lipoyl synthase family. Requires [4Fe-4S] cluster as cofactor.

The protein resides in the cytoplasm. The catalysed reaction is [[Fe-S] cluster scaffold protein carrying a second [4Fe-4S](2+) cluster] + N(6)-octanoyl-L-lysyl-[protein] + 2 oxidized [2Fe-2S]-[ferredoxin] + 2 S-adenosyl-L-methionine + 4 H(+) = [[Fe-S] cluster scaffold protein] + N(6)-[(R)-dihydrolipoyl]-L-lysyl-[protein] + 4 Fe(3+) + 2 hydrogen sulfide + 2 5'-deoxyadenosine + 2 L-methionine + 2 reduced [2Fe-2S]-[ferredoxin]. It participates in protein modification; protein lipoylation via endogenous pathway; protein N(6)-(lipoyl)lysine from octanoyl-[acyl-carrier-protein]: step 2/2. Catalyzes the radical-mediated insertion of two sulfur atoms into the C-6 and C-8 positions of the octanoyl moiety bound to the lipoyl domains of lipoate-dependent enzymes, thereby converting the octanoylated domains into lipoylated derivatives. This is Lipoyl synthase from Novosphingobium aromaticivorans (strain ATCC 700278 / DSM 12444 / CCUG 56034 / CIP 105152 / NBRC 16084 / F199).